The following is a 185-amino-acid chain: Ribosome-recycling factor (185 aa).

The protein belongs to the RRF family.

Its subcellular location is the cytoplasm. In terms of biological role, responsible for the release of ribosomes from messenger RNA at the termination of protein biosynthesis. May increase the efficiency of translation by recycling ribosomes from one round of translation to another. The polypeptide is Ribosome-recycling factor (Macrococcus caseolyticus (strain JCSC5402) (Macrococcoides caseolyticum)).